The following is a 411-amino-acid chain: Floricaula/leafy-like protein (411 aa).

The tract at residues 220 to 259 (PDTNYGSEQTKACKKQKRRRSKDSGEDGEERQREHPFIVT) is disordered. Basic residues predominate over residues 231–240 (ACKKQKRRRS). Basic and acidic residues predominate over residues 241–255 (KDSGEDGEERQREHP). 3 consecutive DNA-binding regions follow at residues 252–256 (REHPF), 321–328 (NKPKMRHY), and 392–395 (YVPT).

Belongs to the FLO/LFY family. Expressed in vegetative buds and male cones but not in female cones, vascular tissue, roots or secondary needles.

The protein resides in the nucleus. Probable transcription factor. The sequence is that of Floricaula/leafy-like protein (FLL) from Pinus radiata (Monterey pine).